The sequence spans 586 residues: Aspartate--tRNA ligase (586 aa).

Position 171 (glutamate 171) interacts with L-aspartate. Residues 195-198 (QLFK) form an aspartate region. L-aspartate is bound at residue arginine 217. Residues 217-219 (RDE) and glutamine 226 each bind ATP. L-aspartate is bound at residue histidine 448. Glutamate 482 contributes to the ATP binding site. L-aspartate is bound at residue arginine 489. An ATP-binding site is contributed by 534-537 (GLDR).

It belongs to the class-II aminoacyl-tRNA synthetase family. Type 1 subfamily. As to quaternary structure, homodimer.

It is found in the cytoplasm. It catalyses the reaction tRNA(Asp) + L-aspartate + ATP = L-aspartyl-tRNA(Asp) + AMP + diphosphate. Its function is as follows. Catalyzes the attachment of L-aspartate to tRNA(Asp) in a two-step reaction: L-aspartate is first activated by ATP to form Asp-AMP and then transferred to the acceptor end of tRNA(Asp). The chain is Aspartate--tRNA ligase from Buchnera aphidicola subsp. Acyrthosiphon pisum (strain APS) (Acyrthosiphon pisum symbiotic bacterium).